We begin with the raw amino-acid sequence, 187 residues long: Probable chemoreceptor glutamine deamidase CheD 1 (187 aa).

It belongs to the CheD family.

The enzyme catalyses L-glutaminyl-[protein] + H2O = L-glutamyl-[protein] + NH4(+). In terms of biological role, probably deamidates glutamine residues to glutamate on methyl-accepting chemotaxis receptors (MCPs), playing an important role in chemotaxis. This Ruegeria sp. (strain TM1040) (Silicibacter sp.) protein is Probable chemoreceptor glutamine deamidase CheD 1.